The primary structure comprises 232 residues: Large ribosomal subunit protein uL1 (232 aa).

It belongs to the universal ribosomal protein uL1 family. Part of the 50S ribosomal subunit.

Its function is as follows. Binds directly to 23S rRNA. The L1 stalk is quite mobile in the ribosome, and is involved in E site tRNA release. In terms of biological role, protein L1 is also a translational repressor protein, it controls the translation of the L11 operon by binding to its mRNA. The sequence is that of Large ribosomal subunit protein uL1 from Burkholderia ambifaria (strain MC40-6).